Consider the following 242-residue polypeptide: TGACG-sequence-specific DNA-binding protein TGA-1B (242 aa).

The interval 1-125 (EFCDFSGNQA…HSSPNFENNS (125 aa)) is disordered. Residues 18–45 (DTSSPELRQSSSGSDVLNATSSTSSHQV) show a composition bias toward polar residues. Residues 66 to 79 (EGSRESANDNKGLG) show a composition bias toward basic and acidic residues. Polar residues predominate over residues 88–125 (SPESQGSGNYGSNVSEGLNYPSDSNKSVHSSPNFENNS). Positions 183–242 (DEKKRARLVRNRESAQLSRQRKKHYVEELEDKVRIMHSTIQDLNAKVAYIIAENATLKTQ) constitute a bZIP domain. The interval 185–216 (KKRARLVRNRESAQLSRQRKKHYVEELEDKVR) is basic motif. The leucine-zipper stretch occupies residues 225–239 (LNAKVAYIIAENATL).

This sequence belongs to the bZIP family.

The protein localises to the nucleus. Functionally, binds specifically to the DNA sequence 5'-TGACG-3'. This Nicotiana tabacum (Common tobacco) protein is TGACG-sequence-specific DNA-binding protein TGA-1B (TGA1B).